Here is a 428-residue protein sequence, read N- to C-terminus: Ribosomal RNA small subunit methyltransferase B (428 aa).

S-adenosyl-L-methionine contacts are provided by residues 253–259 (CAAPGGK), Asp276, Asp302, and Asp321. The Nucleophile role is filled by Cys374.

Belongs to the class I-like SAM-binding methyltransferase superfamily. RsmB/NOP family.

The protein localises to the cytoplasm. The enzyme catalyses cytidine(967) in 16S rRNA + S-adenosyl-L-methionine = 5-methylcytidine(967) in 16S rRNA + S-adenosyl-L-homocysteine + H(+). Specifically methylates the cytosine at position 967 (m5C967) of 16S rRNA. The polypeptide is Ribosomal RNA small subunit methyltransferase B (Enterobacter sp. (strain 638)).